The sequence spans 176 residues: Acireductone dioxygenase (176 aa).

Fe(2+)-binding residues include H81, H83, E87, and H126. Ni(2+) contacts are provided by H81, H83, E87, and H126.

This sequence belongs to the acireductone dioxygenase (ARD) family. The cofactor is Fe(2+). Requires Ni(2+) as cofactor.

Its subcellular location is the cytoplasm. It is found in the nucleus. It carries out the reaction 1,2-dihydroxy-5-(methylsulfanyl)pent-1-en-3-one + O2 = 4-methylsulfanyl-2-oxobutanoate + formate + 2 H(+). The enzyme catalyses 1,2-dihydroxy-5-(methylsulfanyl)pent-1-en-3-one + O2 = 3-(methylsulfanyl)propanoate + CO + formate + 2 H(+). The protein operates within amino-acid biosynthesis; L-methionine biosynthesis via salvage pathway; L-methionine from S-methyl-5-thio-alpha-D-ribose 1-phosphate: step 5/6. Functionally, catalyzes 2 different reactions between oxygen and the acireductone 1,2-dihydroxy-3-keto-5-methylthiopentene (DHK-MTPene) depending upon the metal bound in the active site. Fe-containing acireductone dioxygenase (Fe-ARD) produces formate and 2-keto-4-methylthiobutyrate (KMTB), the alpha-ketoacid precursor of methionine in the methionine recycle pathway. Ni-containing acireductone dioxygenase (Ni-ARD) produces methylthiopropionate, carbon monoxide and formate, and does not lie on the methionine recycle pathway. The sequence is that of Acireductone dioxygenase (adi1) from Sclerotinia sclerotiorum (strain ATCC 18683 / 1980 / Ss-1) (White mold).